The chain runs to 337 residues: Protein-methionine-sulfoxide reductase catalytic subunit MsrP (337 aa).

A signal peptide (tat-type signal) is located at residues Met-1–Ala-48. Residues Asn-94, Tyr-97–Glu-98, Cys-152, Thr-187, Asn-237, Arg-242, and Ser-253–Lys-255 each bind Mo-molybdopterin.

It belongs to the MsrP family. Heterodimer of a catalytic subunit (MsrP) and a heme-binding subunit (MsrQ). Mo-molybdopterin is required as a cofactor. In terms of processing, predicted to be exported by the Tat system. The position of the signal peptide cleavage has not been experimentally proven.

It is found in the periplasm. It carries out the reaction L-methionyl-[protein] + a quinone + H2O = L-methionyl-(S)-S-oxide-[protein] + a quinol. The enzyme catalyses L-methionyl-[protein] + a quinone + H2O = L-methionyl-(R)-S-oxide-[protein] + a quinol. Part of the MsrPQ system that repairs oxidized periplasmic proteins containing methionine sulfoxide residues (Met-O), using respiratory chain electrons. Thus protects these proteins from oxidative-stress damage caused by reactive species of oxygen and chlorine generated by the host defense mechanisms. MsrPQ is essential for the maintenance of envelope integrity under bleach stress, rescuing a wide series of structurally unrelated periplasmic proteins from methionine oxidation. The catalytic subunit MsrP is non-stereospecific, being able to reduce both (R-) and (S-) diastereoisomers of methionine sulfoxide. In Pseudomonas aeruginosa (strain ATCC 15692 / DSM 22644 / CIP 104116 / JCM 14847 / LMG 12228 / 1C / PRS 101 / PAO1), this protein is Protein-methionine-sulfoxide reductase catalytic subunit MsrP.